The chain runs to 1198 residues: Structural polyprotein (1198 aa).

The segment at 2 to 15 (TKKPGGPGKNRAIN) is interaction with host EXOC1. At 2–109 (TKKPGGPGKN…RKQNKRGGNE (108 aa)) the chain is on the cytoplasmic side. Residues 37-72 (LLDGRGPVRFVLALITFFKFTALAPTKALLGRWKAV) are hydrophobic; homodimerization of capsid protein C. Positions 106–127 (GGNEGSIMWLASLAVVIAYAGA) are cleaved as a propeptide — ER anchor for the capsid protein C, removed in mature form by serine protease NS3. Residues 110–130 (GSIMWLASLAVVIAYAGAMKL) form a helical membrane-spanning segment. Residues 131 to 253 (SNFQGKLLMT…ATRYLMKTEN (123 aa)) are Extracellular-facing. A glycan (N-linked (GlcNAc...) asparagine; by host) is linked at Asn142. The helical transmembrane segment at 254–274 (WIIRNPGYAFLAATLGWMLGS) threads the bilayer. Residues 275 to 279 (NNGQR) are Cytoplasmic-facing. A helical membrane pass occupies residues 280–294 (VVFTILLLLVAPAYS). Residues 295–746 (FNCLGMGNRD…QVFGGAFRTL (452 aa)) are Extracellular-facing. 6 disulfide bridges follow: Cys297–Cys324, Cys354–Cys410, Cys354–Cys415, Cys368–Cys399, Cys386–Cys410, and Cys386–Cys415. The interval 392-405 (DRGWGNGCGLFGKG) is fusion peptide. N-linked (GlcNAc...) asparagine; by host glycosylation is present at Asn448. Cystine bridges form between Cys484–Cys581 and Cys598–Cys629. A helical membrane pass occupies residues 747-767 (FGGMSWITQGLMGALLLWMGV). The Cytoplasmic segment spans residues 768–773 (NARDRS). The chain crosses the membrane as a helical span at residues 774-794 (IALAFLATGGVLVFLATNVHA). Residues 795-1198 (DTGCAIDITR…CADAWGHHLH (404 aa)) lie on the Extracellular side of the membrane. Cystine bridges form between Cys798-Cys809, Cys849-Cys937, Cys973-Cys1017, Cys1074-Cys1123, Cys1085-Cys1106, and Cys1107-Cys1110. N-linked (GlcNAc...) asparagine; by host glycans are attached at residues Asn924 and Asn1001. Positions 1152 to 1177 (VDPFSAGPSGDVSGHPGGPSQEVDGQ) are disordered.

In terms of assembly, homodimer. Interacts (via N-terminus) with host EXOC1 (via C-terminus); this interaction results in EXOC1 degradation through the proteasome degradation pathway. Interacts with host CAPRIN1; this interaction is involved in the suppression of the integrated stress response. As to quaternary structure, forms heterodimers with envelope protein E in the endoplasmic reticulum and Golgi. Homodimer; in the endoplasmic reticulum and Golgi. Interacts with protein prM. Interacts with non-structural protein 1. Post-translationally, genome polyprotein: Specific enzymatic cleavages in vivo yield mature proteins. Cleavages in the lumen of endoplasmic reticulum are performed by host signal peptidase, whereas cleavages in the cytoplasmic side are performed by serine protease NS3. Signal cleavage at the 2K-4B site requires a prior NS3 protease-mediated cleavage at the 4A-2K site. Cleaved in post-Golgi vesicles by a host furin, releasing the mature small envelope protein M, and peptide pr. This cleavage is incomplete as up to 30% of viral particles still carry uncleaved prM. In terms of processing, N-glycosylated.

It is found in the secreted. Its subcellular location is the virion membrane. The protein resides in the host endoplasmic reticulum membrane. Its function is as follows. Plays a role in virus budding by binding to the cell membrane and gathering the viral RNA into a nucleocapsid that forms the core of a mature virus particle. During virus entry, may induce genome penetration into the host cytoplasm after hemifusion induced by the surface proteins. Can migrate to the cell nucleus where it modulates host functions. Overcomes the anti-viral effects of host EXOC1 by sequestering and degrading the latter through the proteasome degradation pathway. Inhibits the integrated stress response (ISR) in the infected cell by binding to host CAPRIN1. In terms of biological role, inhibits RNA silencing by interfering with host Dicer. Functionally, prevents premature fusion activity of envelope proteins in trans-Golgi by binding to envelope protein E at pH6.0. After virion release in extracellular space, gets dissociated from E dimers. Acts as a chaperone for envelope protein E during intracellular virion assembly by masking and inactivating envelope protein E fusion peptide. prM is the only viral peptide matured by host furin in the trans-Golgi network probably to avoid catastrophic activation of the viral fusion activity in acidic Golgi compartment prior to virion release. prM-E cleavage is inefficient, and many virions are only partially matured. These uncleaved prM would play a role in immune evasion. Its function is as follows. May play a role in virus budding. Exerts cytotoxic effects by activating a mitochondrial apoptotic pathway through M ectodomain. May display a viroporin activity. In terms of biological role, binds to host cell surface receptor and mediates fusion between viral and cellular membranes. Envelope protein is synthesized in the endoplasmic reticulum in the form of heterodimer with protein prM. They play a role in virion budding in the ER, and the newly formed immature particle is covered with 60 spikes composed of heterodimer between precursor prM and envelope protein E. The virion is transported to the Golgi apparatus where the low pH causes dissociation of PrM-E heterodimers and formation of E homodimers. prM-E cleavage is inefficient, and many virions are only partially matured. These uncleaved prM would play a role in immune evasion. Functionally, may play a role in neuroinvasiveness. This is Structural polyprotein from Japanese encephalitis virus (strain Jaoars982) (JEV).